The chain runs to 313 residues: Porphobilinogen deaminase (313 aa).

S-(dipyrrolylmethanemethyl)cysteine is present on Cys241.

Belongs to the HMBS family. As to quaternary structure, monomer. It depends on dipyrromethane as a cofactor.

It carries out the reaction 4 porphobilinogen + H2O = hydroxymethylbilane + 4 NH4(+). It participates in porphyrin-containing compound metabolism; protoporphyrin-IX biosynthesis; coproporphyrinogen-III from 5-aminolevulinate: step 2/4. Functionally, tetrapolymerization of the monopyrrole PBG into the hydroxymethylbilane pre-uroporphyrinogen in several discrete steps. The sequence is that of Porphobilinogen deaminase from Bacillus velezensis (strain DSM 23117 / BGSC 10A6 / LMG 26770 / FZB42) (Bacillus amyloliquefaciens subsp. plantarum).